The primary structure comprises 187 residues: Protein GrpE (187 aa).

Residues 1–25 form a disordered region; sequence MADEQNLDNRAPEETPAAEGTSAGE.

The protein belongs to the GrpE family. As to quaternary structure, homodimer.

It is found in the cytoplasm. Participates actively in the response to hyperosmotic and heat shock by preventing the aggregation of stress-denatured proteins, in association with DnaK and GrpE. It is the nucleotide exchange factor for DnaK and may function as a thermosensor. Unfolded proteins bind initially to DnaJ; upon interaction with the DnaJ-bound protein, DnaK hydrolyzes its bound ATP, resulting in the formation of a stable complex. GrpE releases ADP from DnaK; ATP binding to DnaK triggers the release of the substrate protein, thus completing the reaction cycle. Several rounds of ATP-dependent interactions between DnaJ, DnaK and GrpE are required for fully efficient folding. The chain is Protein GrpE from Azotobacter vinelandii (strain DJ / ATCC BAA-1303).